The sequence spans 552 residues: Arginine--tRNA ligase (552 aa).

Residues A123–R133 carry the 'HIGH' region motif.

It belongs to the class-I aminoacyl-tRNA synthetase family. Monomer.

The protein localises to the cytoplasm. It carries out the reaction tRNA(Arg) + L-arginine + ATP = L-arginyl-tRNA(Arg) + AMP + diphosphate. This chain is Arginine--tRNA ligase, found in Pelodictyon phaeoclathratiforme (strain DSM 5477 / BU-1).